A 105-amino-acid polypeptide reads, in one-letter code: ATP synthase F(0) complex subunit a (105 aa).

3 consecutive transmembrane segments (helical) span residues 14-34 (EGTPVPLIPVLIIIETISLFI), 47-67 (LTAGHLLIQLIATAAFVLLPM), and 72-92 (AILTSIVLFLLTLLEIAVAMI).

It belongs to the ATPase A chain family. Component of the ATP synthase complex composed at least of ATP5F1A/subunit alpha, ATP5F1B/subunit beta, ATP5MC1/subunit c (homooctomer), MT-ATP6/subunit a, MT-ATP8/subunit 8, ATP5ME/subunit e, ATP5MF/subunit f, ATP5MG/subunit g, ATP5MK/subunit k, ATP5MJ/subunit j, ATP5F1C/subunit gamma, ATP5F1D/subunit delta, ATP5F1E/subunit epsilon, ATP5PF/subunit F6, ATP5PB/subunit b, ATP5PD/subunit d, ATP5PO/subunit OSCP. ATP synthase complex consists of a soluble F(1) head domain (subunits alpha(3) and beta(3)) - the catalytic core - and a membrane F(0) domain - the membrane proton channel (subunits c, a, 8, e, f, g, k and j). These two domains are linked by a central stalk (subunits gamma, delta, and epsilon) rotating inside the F1 region and a stationary peripheral stalk (subunits F6, b, d, and OSCP). Interacts with DNAJC30; interaction is direct.

The protein localises to the mitochondrion inner membrane. It carries out the reaction H(+)(in) = H(+)(out). Its function is as follows. Subunit a, of the mitochondrial membrane ATP synthase complex (F(1)F(0) ATP synthase or Complex V) that produces ATP from ADP in the presence of a proton gradient across the membrane which is generated by electron transport complexes of the respiratory chain. ATP synthase complex consist of a soluble F(1) head domain - the catalytic core - and a membrane F(1) domain - the membrane proton channel. These two domains are linked by a central stalk rotating inside the F(1) region and a stationary peripheral stalk. During catalysis, ATP synthesis in the catalytic domain of F(1) is coupled via a rotary mechanism of the central stalk subunits to proton translocation. With the subunit c (ATP5MC1), forms the proton-conducting channel in the F(0) domain, that contains two crucial half-channels (inlet and outlet) that facilitate proton movement from the mitochondrial intermembrane space (IMS) into the matrix. Protons are taken up via the inlet half-channel and released through the outlet half-channel, following a Grotthuss mechanism. This Salmo trutta (Brown trout) protein is ATP synthase F(0) complex subunit a.